A 311-amino-acid chain; its full sequence is Mediator of RNA polymerase II transcription subunit 27-A (311 aa).

The protein belongs to the Mediator complex subunit 27 family. Component of the Mediator complex.

The protein resides in the nucleus. Functionally, component of the Mediator complex, a coactivator involved in the regulated transcription of nearly all RNA polymerase II-dependent genes. Mediator functions as a bridge to convey information from gene-specific regulatory proteins to the basal RNA polymerase II transcription machinery. Mediator is recruited to promoters by direct interactions with regulatory proteins and serves as a scaffold for the assembly of a functional preinitiation complex with RNA polymerase II and the general transcription factors. This is Mediator of RNA polymerase II transcription subunit 27-A (med27-a) from Xenopus laevis (African clawed frog).